Consider the following 118-residue polypeptide: Large ribosomal subunit protein uL18 (118 aa).

This sequence belongs to the universal ribosomal protein uL18 family. Part of the 50S ribosomal subunit; part of the 5S rRNA/L5/L18/L25 subcomplex. Contacts the 5S and 23S rRNAs.

In terms of biological role, this is one of the proteins that bind and probably mediate the attachment of the 5S RNA into the large ribosomal subunit, where it forms part of the central protuberance. The sequence is that of Large ribosomal subunit protein uL18 from Limosilactobacillus reuteri (strain DSM 20016) (Lactobacillus reuteri).